The chain runs to 416 residues: Serine hydroxymethyltransferase (416 aa).

(6S)-5,6,7,8-tetrahydrofolate contacts are provided by residues leucine 121 and 125-127 (GHL). Lysine 229 is subject to N6-(pyridoxal phosphate)lysine.

It belongs to the SHMT family. Homodimer. Requires pyridoxal 5'-phosphate as cofactor.

It is found in the cytoplasm. It carries out the reaction (6R)-5,10-methylene-5,6,7,8-tetrahydrofolate + glycine + H2O = (6S)-5,6,7,8-tetrahydrofolate + L-serine. The protein operates within one-carbon metabolism; tetrahydrofolate interconversion. It functions in the pathway amino-acid biosynthesis; glycine biosynthesis; glycine from L-serine: step 1/1. Catalyzes the reversible interconversion of serine and glycine with tetrahydrofolate (THF) serving as the one-carbon carrier. This reaction serves as the major source of one-carbon groups required for the biosynthesis of purines, thymidylate, methionine, and other important biomolecules. Also exhibits THF-independent aldolase activity toward beta-hydroxyamino acids, producing glycine and aldehydes, via a retro-aldol mechanism. The protein is Serine hydroxymethyltransferase of Aromatoleum aromaticum (strain DSM 19018 / LMG 30748 / EbN1) (Azoarcus sp. (strain EbN1)).